Consider the following 165-residue polypeptide: Probable bacterial non-heme ferritin-like protein (165 aa).

In terms of domain architecture, Ferritin-like diiron spans 1–145; the sequence is MLSENVVKLL…SILDKLNFLG (145 aa). Glu-17, Glu-50, His-53, Glu-94, and Gln-127 together coordinate Fe cation.

Belongs to the ferritin family. Prokaryotic subfamily.

It is found in the cytoplasm. The polypeptide is Probable bacterial non-heme ferritin-like protein (ftnB) (Haemophilus influenzae (strain ATCC 51907 / DSM 11121 / KW20 / Rd)).